The sequence spans 406 residues: Autotransporter heptosyltransferase TibC (406 aa).

ADP-D-glycero-beta-D-manno-heptose is bound by residues threonine 107, leucine 108, and glycine 109. The active-site Proton acceptor is the aspartate 110. ADP-D-glycero-beta-D-manno-heptose is bound by residues glutamine 224, threonine 226, lysine 230, arginine 257, leucine 281, glycine 302, and glutamate 326. Residues cysteine 339, cysteine 342, cysteine 358, and cysteine 370 each contribute to the Fe(3+) site.

Belongs to the glycosyltransferase 9 family. As to quaternary structure, homododecamer composed of 6 homodimers forming a ring. The cofactor is Fe(3+).

It catalyses the reaction ADP-D-glycero-beta-D-manno-heptose + L-seryl-[protein] = O-(D-glycero-alpha-D-manno-heptosyl)-L-seryl-[protein] + ADP + H(+). Glycosylates adhesin TibA. Specifically adds anomer D-glycero-beta-D-manno-heptose. Cannot use ADP-L-glycero-beta-D-manno-heptose as a sugar donor. This is Autotransporter heptosyltransferase TibC from Escherichia coli O78:H11 (strain H10407 / ETEC).